The primary structure comprises 423 residues: UDP-N-acetylglucosamine 1-carboxyvinyltransferase 2 (423 aa).

Position 23-24 (23-24) interacts with phosphoenolpyruvate; sequence KN. Arg95 is a UDP-N-acetyl-alpha-D-glucosamine binding site. Cys119 (proton donor) is an active-site residue. Position 119 is a 2-(S-cysteinyl)pyruvic acid O-phosphothioketal (Cys119). UDP-N-acetyl-alpha-D-glucosamine-binding residues include Asp306 and Ile328.

This sequence belongs to the EPSP synthase family. MurA subfamily.

Its subcellular location is the cytoplasm. The catalysed reaction is phosphoenolpyruvate + UDP-N-acetyl-alpha-D-glucosamine = UDP-N-acetyl-3-O-(1-carboxyvinyl)-alpha-D-glucosamine + phosphate. Its pathway is cell wall biogenesis; peptidoglycan biosynthesis. Cell wall formation. Adds enolpyruvyl to UDP-N-acetylglucosamine. The polypeptide is UDP-N-acetylglucosamine 1-carboxyvinyltransferase 2 (Symbiobacterium thermophilum (strain DSM 24528 / JCM 14929 / IAM 14863 / T)).